Here is a 269-residue protein sequence, read N- to C-terminus: 5'-nucleotidase SurE (269 aa).

Residues Asp-8, Asp-9, Ser-40, and Asn-95 each coordinate a divalent metal cation.

Belongs to the SurE nucleotidase family. The cofactor is a divalent metal cation.

It is found in the cytoplasm. The catalysed reaction is a ribonucleoside 5'-phosphate + H2O = a ribonucleoside + phosphate. Its function is as follows. Nucleotidase that shows phosphatase activity on nucleoside 5'-monophosphates. This chain is 5'-nucleotidase SurE, found in Nitratidesulfovibrio vulgaris (strain DSM 19637 / Miyazaki F) (Desulfovibrio vulgaris).